The primary structure comprises 142 residues: MAKKIAGYVKLQVPAGDAKPAPPIGPALGQRGLNIMEFCKAFNAKTAQMEKGTPIPVVITAYADRSFTFEMKLPPVSYFLKKASGIQSGAKTTGRGFIGKVTKAQVREIAEKKLPDLNCQSVDAAATMIEGSARSMGLQVVE.

Belongs to the universal ribosomal protein uL11 family. Part of the ribosomal stalk of the 50S ribosomal subunit. Interacts with L10 and the large rRNA to form the base of the stalk. L10 forms an elongated spine to which L12 dimers bind in a sequential fashion forming a multimeric L10(L12)X complex. Post-translationally, one or more lysine residues are methylated.

Functionally, forms part of the ribosomal stalk which helps the ribosome interact with GTP-bound translation factors. In Beijerinckia indica subsp. indica (strain ATCC 9039 / DSM 1715 / NCIMB 8712), this protein is Large ribosomal subunit protein uL11.